The chain runs to 216 residues: Protein-L-isoaspartate O-methyltransferase (216 aa).

S65 is an active-site residue.

Belongs to the methyltransferase superfamily. L-isoaspartyl/D-aspartyl protein methyltransferase family.

The protein resides in the cytoplasm. The enzyme catalyses [protein]-L-isoaspartate + S-adenosyl-L-methionine = [protein]-L-isoaspartate alpha-methyl ester + S-adenosyl-L-homocysteine. In terms of biological role, catalyzes the methyl esterification of L-isoaspartyl residues in peptides and proteins that result from spontaneous decomposition of normal L-aspartyl and L-asparaginyl residues. It plays a role in the repair and/or degradation of damaged proteins. This chain is Protein-L-isoaspartate O-methyltransferase, found in Chlorobium phaeobacteroides (strain DSM 266 / SMG 266 / 2430).